Here is a 352-residue protein sequence, read N- to C-terminus: Isopentenyl-diphosphate delta-isomerase (352 aa).

Position 6–7 (6–7 (RK)) interacts with substrate. Residues 63-65 (AMT), S93, and N122 contribute to the FMN site. 93 to 95 (SQR) serves as a coordination point for substrate. Q160 contributes to the substrate binding site. A Mg(2+)-binding site is contributed by E161. FMN is bound by residues K192, T221, 271–273 (GIR), and 292–293 (SQ).

The protein belongs to the IPP isomerase type 2 family. As to quaternary structure, homooctamer. Dimer of tetramers. FMN serves as cofactor. The cofactor is NADPH. Mg(2+) is required as a cofactor.

It is found in the cytoplasm. The catalysed reaction is isopentenyl diphosphate = dimethylallyl diphosphate. Involved in the biosynthesis of isoprenoids. Catalyzes the 1,3-allylic rearrangement of the homoallylic substrate isopentenyl (IPP) to its allylic isomer, dimethylallyl diphosphate (DMAPP). In Pyrobaculum aerophilum (strain ATCC 51768 / DSM 7523 / JCM 9630 / CIP 104966 / NBRC 100827 / IM2), this protein is Isopentenyl-diphosphate delta-isomerase.